Here is a 227-residue protein sequence, read N- to C-terminus: UPF0173 metal-dependent hydrolase Saci_1512 (227 aa).

It belongs to the UPF0173 family.

The polypeptide is UPF0173 metal-dependent hydrolase Saci_1512 (Sulfolobus acidocaldarius (strain ATCC 33909 / DSM 639 / JCM 8929 / NBRC 15157 / NCIMB 11770)).